The sequence spans 506 residues: ATP synthase subunit alpha, chloroplastic (506 aa).

Residue 172–179 (GDRQTGKT) participates in ATP binding.

Belongs to the ATPase alpha/beta chains family. In terms of assembly, F-type ATPases have 2 components, CF(1) - the catalytic core - and CF(0) - the membrane proton channel. CF(1) has five subunits: alpha(3), beta(3), gamma(1), delta(1), epsilon(1). CF(0) has four main subunits: a, b, b' and c.

Its subcellular location is the plastid. It is found in the chloroplast thylakoid membrane. The catalysed reaction is ATP + H2O + 4 H(+)(in) = ADP + phosphate + 5 H(+)(out). Functionally, produces ATP from ADP in the presence of a proton gradient across the membrane. The alpha chain is a regulatory subunit. This chain is ATP synthase subunit alpha, chloroplastic, found in Pleurastrum terricola (Filamentous green alga).